A 356-amino-acid chain; its full sequence is Putative methylthioribose-1-phosphate isomerase (356 aa).

Residues 57–59 (RGA), Arg100, and Gln206 each bind substrate. Asp247 (proton donor) is an active-site residue. 257–258 (NK) provides a ligand contact to substrate.

It belongs to the eIF-2B alpha/beta/delta subunits family. MtnA subfamily.

It catalyses the reaction 5-(methylsulfanyl)-alpha-D-ribose 1-phosphate = 5-(methylsulfanyl)-D-ribulose 1-phosphate. In terms of biological role, catalyzes the interconversion of methylthioribose-1-phosphate (MTR-1-P) into methylthioribulose-1-phosphate (MTRu-1-P). The polypeptide is Putative methylthioribose-1-phosphate isomerase (aIF-2BI) (Pyrococcus abyssi (strain GE5 / Orsay)).